The sequence spans 609 residues: Spore coat protein homolog 1 (609 aa).

A signal peptide spans 1 to 17 (MKSLLFVVFIFLTTTYA). Residues N82, N397, and N440 are each glycosylated (N-linked (GlcNAc...) asparagine). The disordered stretch occupies residues 527-547 (TVTQVPEAPGTDGTPSESTAW). S584 carries the GPI-anchor amidated serine lipid modification. A propeptide spans 585–609 (SSSIKRTPCILPLVILASTLFASFF) (removed in mature form).

It is found in the cell membrane. Its function is as follows. May play a role in cell adhesion. This is Spore coat protein homolog 1 from Rhizopus delemar (strain RA 99-880 / ATCC MYA-4621 / FGSC 9543 / NRRL 43880) (Mucormycosis agent).